The sequence spans 878 residues: Phosphoenolpyruvate carboxylase (878 aa).

Catalysis depends on residues His140 and Lys545.

It belongs to the PEPCase type 1 family. Mg(2+) is required as a cofactor.

The catalysed reaction is oxaloacetate + phosphate = phosphoenolpyruvate + hydrogencarbonate. Forms oxaloacetate, a four-carbon dicarboxylic acid source for the tricarboxylic acid cycle. This chain is Phosphoenolpyruvate carboxylase, found in Ectopseudomonas mendocina (strain ymp) (Pseudomonas mendocina).